The primary structure comprises 199 residues: uncharacterized protein (199 aa).

The helical transmembrane segment at 7-27 threads the bilayer; sequence FWFWLILGIIALFIIVKAIVI.

It belongs to the band 7/mec-2 family.

The protein resides in the membrane. This is an uncharacterized protein from Methanocaldococcus jannaschii (strain ATCC 43067 / DSM 2661 / JAL-1 / JCM 10045 / NBRC 100440) (Methanococcus jannaschii).